A 709-amino-acid polypeptide reads, in one-letter code: MLNFFAAAPKGFEYSLAQELTEFGATEIKESVAGVYFTAPLTLAYRITLWTRLASRIVLVIYKGSCESAEQLYNAAYCIDWPAHFSNRNTFSIDFHGTGGFINNTQFGALKIKDAIVDRFRDDGDERPNVSRTDADFKVDAHFRNGVITIAMNFSGPSLHQRGYRSTTGEAPLKENLAANMLVRSGWQAAPTTLLDPFCGSGTVLIEAALMAADIAPGLQRNRFGFEHWRRHDKAVWQDIVAEAKARASLGVKRCEIKFYGSDIDSRLVALAKRNAENAGVLELIEFKVANALNIEPPAAEGYLITNPPYGERLGNVSELLQLYYQLGDKFKKEFGGWKVAMLCSDIELISSLKLKADKQMKMFNGALECAFNLYTLHANSTRRDTPVLPEGVDIADIAPAFANRIKKNAKQLEKWAQKEGIDSYRIYDADIPEYNVAVDKYLDYVIVQEYMAPATIPEAVTKRRLSDVLLALPAAIGINPNKIIMKTRERQKGTSQYQKLDERKLELITTEYGAKFKLNLTGYLDTGLFLDHRLTRRLVGQKAKGRRVLNLFSYTGSASVHAALGGAKSVTTVDMSNTYIAWAKDNFALNGLQGKQYEFVQADCLQWIRDCNEQFDLIFIDPPTFSNSKRMEDSFDVQRDHVNLLSALVKLLSPTGELVFSNNKRKFKMDIETLTKMNITVKNIDDITLPMDYKRNPHIHNTWLITHA.

The region spanning 43–154 is the THUMP domain; it reads LAYRITLWTR…NGVITIAMNF (112 aa).

Belongs to the methyltransferase superfamily. RlmKL family.

The protein localises to the cytoplasm. It catalyses the reaction guanosine(2445) in 23S rRNA + S-adenosyl-L-methionine = N(2)-methylguanosine(2445) in 23S rRNA + S-adenosyl-L-homocysteine + H(+). The catalysed reaction is guanosine(2069) in 23S rRNA + S-adenosyl-L-methionine = N(2)-methylguanosine(2069) in 23S rRNA + S-adenosyl-L-homocysteine + H(+). Functionally, specifically methylates the guanine in position 2445 (m2G2445) and the guanine in position 2069 (m7G2069) of 23S rRNA. The polypeptide is Ribosomal RNA large subunit methyltransferase K/L (Shewanella sp. (strain W3-18-1)).